The primary structure comprises 135 residues: Large ribosomal subunit protein bL17 (135 aa).

It belongs to the bacterial ribosomal protein bL17 family. In terms of assembly, part of the 50S ribosomal subunit. Contacts protein L32.

The chain is Large ribosomal subunit protein bL17 from Listeria welshimeri serovar 6b (strain ATCC 35897 / DSM 20650 / CCUG 15529 / CIP 8149 / NCTC 11857 / SLCC 5334 / V8).